The sequence spans 386 residues: uncharacterized protein (386 aa).

An F-box domain is found at 29–76 (KYWKFLNEDCKIEVLKYLDYCSRCQLSICSKSDHKLVSITPLYVYEIE).

This is an uncharacterized protein from Caenorhabditis elegans.